The chain runs to 121 residues: Apoptin (121 aa).

2 disordered regions span residues 1–28 and 57–121; these read MNAL…LETP and LRSA…CIRL. Positions 58-70 are enriched in polar residues; that stretch reads RSATADNSESTGF. Residues 88–102 show a composition bias toward basic and acidic residues; sequence RSCDPSEYRVSELKE.

This sequence belongs to the gyrovirus apoptin family.

Its subcellular location is the host nucleus. Its function is as follows. May act as transcriptional regulator. Induces apoptosis in infected cells. Element of infectious replication cycle. This is Apoptin (VP3) from Gallus gallus (Chicken).